A 234-amino-acid polypeptide reads, in one-letter code: Sugar fermentation stimulation protein A (234 aa).

The segment at residues 201–220 (LLSEAQNKGVEVLAYKAELS) is a DNA-binding region (H-T-H motif).

The protein belongs to the SfsA family.

Functionally, binds to DNA non-specifically. Could be a regulatory factor involved in maltose metabolism. This Salmonella dublin (strain CT_02021853) protein is Sugar fermentation stimulation protein A.